The primary structure comprises 878 residues: Alanine--tRNA ligase (878 aa).

Zn(2+) contacts are provided by H566, H570, C668, and H672.

The protein belongs to the class-II aminoacyl-tRNA synthetase family. It depends on Zn(2+) as a cofactor.

The protein localises to the cytoplasm. The catalysed reaction is tRNA(Ala) + L-alanine + ATP = L-alanyl-tRNA(Ala) + AMP + diphosphate. In terms of biological role, catalyzes the attachment of alanine to tRNA(Ala) in a two-step reaction: alanine is first activated by ATP to form Ala-AMP and then transferred to the acceptor end of tRNA(Ala). Also edits incorrectly charged Ser-tRNA(Ala) and Gly-tRNA(Ala) via its editing domain. This chain is Alanine--tRNA ligase, found in Geobacillus thermodenitrificans (strain NG80-2).